The primary structure comprises 67 residues: Large ribosomal subunit protein bL35 (67 aa).

The protein belongs to the bacterial ribosomal protein bL35 family.

The sequence is that of Large ribosomal subunit protein bL35 from Rhizobium etli (strain ATCC 51251 / DSM 11541 / JCM 21823 / NBRC 15573 / CFN 42).